Consider the following 1036-residue polypeptide: Protein CLEC16A (1036 aa).

In terms of domain architecture, FPL spans 51 to 198 (IRSITEILIW…AVRTITLNVY (148 aa)). Disordered regions lie at residues 375 to 416 (SLEM…DAEK), 437 to 458 (GTSVQEQNTTDEEKSAATNSEN), 876 to 967 (HSSP…PSLL), and 1008 to 1036 (SQLPTLPAADTETPAEGAVNPEPAEPTEH). Residues 381-392 (HKGKKRMQKRPN) are compositionally biased toward basic residues. 3 stretches are compositionally biased toward low complexity: residues 877–891 (SSPSLSSPSPPFASG), 898–923 (STSHCDSGGSSSAPSATQSPADAPTT), and 943–954 (NSKPSKNSSARS).

Belongs to the CLEC16A/gop-1 family. Interacts with RNF41/NRDP1. Ubiquitously expressed. Expressed in pancreatic islets.

The protein localises to the endosome membrane. Its subcellular location is the lysosome membrane. Its function is as follows. Regulator of mitophagy through the upstream regulation of the RNF41/NRDP1-PRKN pathway. Mitophagy is a selective form of autophagy necessary for mitochondrial quality control. The RNF41/NRDP1-PRKN pathway regulates autophagosome-lysosome fusion during late mitophagy. May protect RNF41/NRDP1 from proteasomal degradation, RNF41/NRDP1 which regulates proteasomal degradation of PRKN. Plays a key role in beta cells functions by regulating mitophagy/autophagy and mitochondrial health. The protein is Protein CLEC16A of Mus musculus (Mouse).